Consider the following 64-residue polypeptide: Alpha-conotoxin Lt14.1 (64 aa).

A signal peptide spans 1–20 (MKLSVMFIVFLMLTMPMTCA). The propeptide occupies 21–50 (GISRSATNGGEADVRAHDKAANLMALLQER). 2 cysteine pairs are disulfide-bonded: C52–C60 and C56–C63. C63 is modified (cysteine amide).

Belongs to the conotoxin L superfamily. Post-translationally, may contain a 4-hydroxyproline. As to expression, expressed by the venom duct.

The protein resides in the secreted. Its function is as follows. Alpha-conotoxins act on postsynaptic membranes, they bind to the nicotinic acetylcholine receptors (nAChR) and thus inhibit them. This synthetic peptide displays analgesic activity in a hot plate assay. Analgesia is also observed against second phase pain in formalin-induced inflammatory pain model, and in a rat model of mechanically-induced pain. Effects downstream of nAChR are inhibition of calcium influx, inhibition of ERK1/2 phosphorylation and inhibition of c-fos/NOS expression. Genes associated with drug dependence are not up-regulated by this toxin. Treatment with this toxin reversed morphine withdrawal symptoms in mice. This chain is Alpha-conotoxin Lt14.1, found in Conus litteratus (Lettered cone).